Here is a 1007-residue protein sequence, read N- to C-terminus: Protocadherin alpha-C2 (1007 aa).

Positions 1-42 (MEQAGTRPAATEHPRLRRPMPWLLLLPLLLLLLLLLPGPAAS) are cleaved as a signal peptide. Cadherin domains lie at 43-148 (QLRY…SPRF), 149-257 (PRPN…SPAF), 258-365 (DQST…APEV), 374-469 (VPEN…PPSF), and 470-579 (LEDS…APHI). At 43 to 708 (QLRYSVPEEQ…RTYSEITLYL (666 aa)) the chain is on the extracellular side. 2 N-linked (GlcNAc...) asparagine glycosylation sites follow: Asn-280 and Asn-436. N-linked (GlcNAc...) asparagine glycans are attached at residues Asn-586 and Asn-657. Positions 594-691 (VPRTAPAGYL…DRVSKILPDT (98 aa)) constitute a Cadherin 6 domain. The helical transmembrane segment at 709–729 (IIALSTVSFIFLLTIIILSII) threads the bilayer. Residues 730–1007 (KCYRYTAYGT…GNSTTDNSDQ (278 aa)) lie on the Cytoplasmic side of the membrane. PXXP repeat units lie at residues 856 to 859 (PRQP), 889 to 892 (PGGP), 930 to 933 (PGNP), and 948 to 951 (PGSP). A 4 X 4 AA repeats of P-X-X-P region spans residues 856 to 951 (PRQPNPDWRY…PDKFIIPGSP (96 aa)). The disordered stretch occupies residues 885–1007 (LRAGPGGPDQ…GNSTTDNSDQ (123 aa)). The segment covering 966-980 (DKSDFITFGKKEETK) has biased composition (basic and acidic residues).

The protein localises to the cell membrane. Its function is as follows. Potential calcium-dependent cell-adhesion protein. May be involved in the establishment and maintenance of specific neuronal connections in the brain. The sequence is that of Protocadherin alpha-C2 (PCDHAC2) from Homo sapiens (Human).